A 519-amino-acid polypeptide reads, in one-letter code: Anthranilate synthase component 1 (519 aa).

L-tryptophan-binding positions include threonine 40 and 293-295 (PYM). Residue 330–331 (GT) participates in chorismate binding. Mg(2+) is bound at residue glutamate 363. Chorismate contacts are provided by residues tyrosine 451, arginine 471, 485 to 487 (GSG), and glycine 487. Residue glutamate 500 participates in Mg(2+) binding.

Belongs to the anthranilate synthase component I family. Heterotetramer consisting of two non-identical subunits: a beta subunit (TrpG) and a large alpha subunit (TrpE). Mg(2+) serves as cofactor.

The enzyme catalyses chorismate + L-glutamine = anthranilate + pyruvate + L-glutamate + H(+). The protein operates within amino-acid biosynthesis; L-tryptophan biosynthesis; L-tryptophan from chorismate: step 1/5. Feedback inhibited by tryptophan. Its function is as follows. Part of a heterotetrameric complex that catalyzes the two-step biosynthesis of anthranilate, an intermediate in the biosynthesis of L-tryptophan. In the first step, the glutamine-binding beta subunit (TrpG) of anthranilate synthase (AS) provides the glutamine amidotransferase activity which generates ammonia as a substrate that, along with chorismate, is used in the second step, catalyzed by the large alpha subunit of AS (TrpE) to produce anthranilate. In the absence of TrpG, TrpE can synthesize anthranilate directly from chorismate and high concentrations of ammonia. The polypeptide is Anthranilate synthase component 1 (trpE) (Buchnera aphidicola subsp. Diuraphis noxia).